Consider the following 538-residue polypeptide: Cytochrome P450 monooxygenase cfoH (538 aa).

Residues 24 to 44 traverse the membrane as a helical segment; sequence VLTFFAILLVAILLWYMIPYF. Cysteine 471 contacts heme.

The protein belongs to the cytochrome P450 family. Heme is required as a cofactor.

It is found in the membrane. It functions in the pathway secondary metabolite biosynthesis; flavonoid biosynthesis. Its function is as follows. Cytochrome P450 monooxygenase; part of the gene cluster that mediates the biosynthesis of chlorflavonin, a fungal flavonoid with acetolactate synthase inhibitory activity. Within the pathway, cfoH is responsible for the hydroxylation of the flavonoid skeleton at position C2'. The pathway begins with the PKS-NRPS hybrid synthetase cfoA that uses benzoic acid or p-hydroxybenzoic acid as a starter unit with four rounds of chain elongation using malonyl-CoA to form the chalcone skeleton. Then, a new type of chalcone isomerase, cfoK, catalyzes the conversion of the chalcone into a flavanone by a histidine-mediated oxa-Michael addition mechanism. The desaturation of flavanone to flavone is catalyzed by a new type of flavone synthase, the flavin mononucleotide (FMN)-dependent oxidoreductase cfoJ. Monooxygenases cfoF, cfoG, and P450 cfoH are responsible for the hydroxylation of the flavonoid skeleton at sites C3, C8, and C2', respectively. Like cfoF, the dehydratase cfoI plays also a role in the hydroxylation of position C3. Methyltransferases cfoB, cfoC, and cfoD then catalyze the methylation of C7-OH, C8-OH, and C3-OH, respectively. Finally, the monooxygenase cfoE is responsible for the chlorination of flavonoid at position C3'. The chain is Cytochrome P450 monooxygenase cfoH from Aspergillus candidus.